Here is a 542-residue protein sequence, read N- to C-terminus: Homeobox protein ceh-18 (542 aa).

The span at 243–252 shows a compositional bias: polar residues; it reads NTPTQPTASL. A disordered region spans residues 243-264; the sequence is NTPTQPTASLTPKKAENRPPVV. One can recognise a POU-specific domain in the interval 290 to 364; it reads DDRIDMNELE…LLKEWLADVE (75 aa). The homeobox DNA-binding region spans 421–480; it reads RRRKRTNLDMNQRNALDTFFALNPRPDHDKMTDIANSLELDRDVVRVWFCNRRQKMRRVD. Residues 514-542 are disordered; it reads LASCQASNDDSDGTSGSPDAPSNDGCSDL. A compositionally biased stretch (polar residues) spans 517–530; it reads CQASNDDSDGTSGS.

This sequence belongs to the POU transcription factor family. As to quaternary structure, interacts with akir-1. Expressed in the gonadal sheath cells that signal the oocyte, but not in the oocyte.

It localises to the nucleus. Directs gonadal sheath cell differentiation and function. Also directs gonad migration and plays a role in specifying the differentiated phenotypes of epidermal cells during postembryonic development. Plays a role in oogenesis, regulating a sheath cell signal that causes oocytes to maintain diakinesis arrest during meiosis. Negatively regulates oocyte maturation, ovulation and MAPK activation in oocytes when sperm are not available for fertilization. May be recruited by akir-1 to the promoter regions of antimicrobial peptide genes to control gene expression in response to fungal infection. The sequence is that of Homeobox protein ceh-18 from Caenorhabditis elegans.